We begin with the raw amino-acid sequence, 481 residues long: NADH-quinone oxidoreductase subunit N (481 aa).

A run of 14 helical transmembrane segments spans residues 11-31, 37-57, 74-94, 103-123, 128-148, 162-182, 205-225, 238-258, 272-292, 300-320, 328-348, 371-391, 405-425, and 457-477; these read AYPE…DLFA, YLAF…TCGI, AMSD…LIYS, LLKG…MVMV, LITL…MVAL, FFVL…MLYG, IFII…SAVP, PTAV…GFVM, WQGM…IAAI, MLAY…IAAG, MFYV…IMLV, LAFM…MIGF, GYIW…FYYL, and LAII…LSAI.

The protein belongs to the complex I subunit 2 family. As to quaternary structure, NDH-1 is composed of 14 different subunits. Subunits NuoA, H, J, K, L, M, N constitute the membrane sector of the complex.

It localises to the cell inner membrane. The catalysed reaction is a quinone + NADH + 5 H(+)(in) = a quinol + NAD(+) + 4 H(+)(out). Its function is as follows. NDH-1 shuttles electrons from NADH, via FMN and iron-sulfur (Fe-S) centers, to quinones in the respiratory chain. The immediate electron acceptor for the enzyme in this species is believed to be ubiquinone. Couples the redox reaction to proton translocation (for every two electrons transferred, four hydrogen ions are translocated across the cytoplasmic membrane), and thus conserves the redox energy in a proton gradient. The chain is NADH-quinone oxidoreductase subunit N from Nitrosomonas europaea (strain ATCC 19718 / CIP 103999 / KCTC 2705 / NBRC 14298).